We begin with the raw amino-acid sequence, 314 residues long: tRNA dimethylallyltransferase (314 aa).

12–19 serves as a coordination point for ATP; it reads GPTASGKT. 14–19 is a binding site for substrate; that stretch reads TASGKT. 2 interaction with substrate tRNA regions span residues 37-40 and 162-166; these read DSAL and QRIIR.

This sequence belongs to the IPP transferase family. Monomer. Requires Mg(2+) as cofactor.

The catalysed reaction is adenosine(37) in tRNA + dimethylallyl diphosphate = N(6)-dimethylallyladenosine(37) in tRNA + diphosphate. Its function is as follows. Catalyzes the transfer of a dimethylallyl group onto the adenine at position 37 in tRNAs that read codons beginning with uridine, leading to the formation of N6-(dimethylallyl)adenosine (i(6)A). The protein is tRNA dimethylallyltransferase of Acinetobacter baumannii (strain SDF).